Here is a 55-residue protein sequence, read N- to C-terminus: Large ribosomal subunit protein bL33 (55 aa).

This sequence belongs to the bacterial ribosomal protein bL33 family.

The sequence is that of Large ribosomal subunit protein bL33 from Aliivibrio salmonicida (strain LFI1238) (Vibrio salmonicida (strain LFI1238)).